A 928-amino-acid chain; its full sequence is DENN domain-containing protein 2C (928 aa).

2 disordered regions span residues 67–105 (KSKN…YDDT) and 245–266 (QSSL…IRGR). Residues 85–105 (ENTKSHDQSENENKKHEYDDT) are compositionally biased toward basic and acidic residues. The residue at position 271 (Ser271) is a Phosphoserine. Residues 428 to 456 (KLHSYTGKELPPTKGETSGNESDAEYLPK) are disordered. A uDENN domain is found at 492 to 641 (ELFVVVSLQK…PFPAPGRTIT (150 aa)). The 134-residue stretch at 663 to 796 (RLEHVDFKCL…LQAALMQILE (134 aa)) folds into the cDENN domain. Positions 798 to 888 (RNEILTQEQN…QDRELRKSGV (91 aa)) constitute a dDENN domain.

Guanine nucleotide exchange factor (GEF) which may activate RAB9A and RAB9B. Promotes the exchange of GDP to GTP, converting inactive GDP-bound Rab proteins into their active GTP-bound form. In Homo sapiens (Human), this protein is DENN domain-containing protein 2C (DENND2C).